Here is a 379-residue protein sequence, read N- to C-terminus: Glutamate 5-kinase (379 aa).

Lysine 19 contributes to the ATP binding site. Substrate-binding residues include serine 59, aspartate 146, and asparagine 158. Residues 178-179 (TD) and 220-226 (TGGMATK) contribute to the ATP site. Residues 285-363 (SGDIVIDQGA…KDIISILGYD (79 aa)) enclose the PUA domain.

This sequence belongs to the glutamate 5-kinase family.

The protein resides in the cytoplasm. The catalysed reaction is L-glutamate + ATP = L-glutamyl 5-phosphate + ADP. The protein operates within amino-acid biosynthesis; L-proline biosynthesis; L-glutamate 5-semialdehyde from L-glutamate: step 1/2. Functionally, catalyzes the transfer of a phosphate group to glutamate to form L-glutamate 5-phosphate. In Vibrio vulnificus (strain YJ016), this protein is Glutamate 5-kinase.